The sequence spans 145 residues: Transcriptional regulator MraZ (145 aa).

2 consecutive SpoVT-AbrB domains span residues 5-47 and 76-119; these read EHQH…PLPE and AVEC…AKDQ.

The protein belongs to the MraZ family. Forms oligomers.

It localises to the cytoplasm. The protein localises to the nucleoid. The protein is Transcriptional regulator MraZ of Pelotomaculum thermopropionicum (strain DSM 13744 / JCM 10971 / SI).